The chain runs to 407 residues: D-3-phosphoglycerate dehydrogenase (407 aa).

NAD(+)-binding positions include 161 to 162, Asp181, 238 to 240, and Asp264; these read HI and ASR. Arg240 is an active-site residue. Glu269 is a catalytic residue. The Proton donor role is filled by His292. 292 to 295 provides a ligand contact to NAD(+); it reads HIGG. Residues 340–407 enclose the ACT domain; that stretch reads RILNIHNNKP…PNSIKTRVLY (68 aa).

This sequence belongs to the D-isomer specific 2-hydroxyacid dehydrogenase family.

It carries out the reaction (2R)-3-phosphoglycerate + NAD(+) = 3-phosphooxypyruvate + NADH + H(+). The enzyme catalyses (R)-2-hydroxyglutarate + NAD(+) = 2-oxoglutarate + NADH + H(+). It functions in the pathway amino-acid biosynthesis; L-serine biosynthesis; L-serine from 3-phospho-D-glycerate: step 1/3. Its function is as follows. Catalyzes the reversible oxidation of 3-phospho-D-glycerate to 3-phosphonooxypyruvate, the first step of the phosphorylated L-serine biosynthesis pathway. Also catalyzes the reversible oxidation of 2-hydroxyglutarate to 2-oxoglutarate. The sequence is that of D-3-phosphoglycerate dehydrogenase (serA) from Dictyostelium discoideum (Social amoeba).